We begin with the raw amino-acid sequence, 68 residues long: Putative membrane protein insertion efficiency factor (68 aa).

This sequence belongs to the UPF0161 family.

The protein resides in the cell inner membrane. In terms of biological role, could be involved in insertion of integral membrane proteins into the membrane. In Hydrogenobaculum sp. (strain Y04AAS1), this protein is Putative membrane protein insertion efficiency factor.